The primary structure comprises 94 residues: Aspartyl/glutamyl-tRNA(Asn/Gln) amidotransferase subunit C (94 aa).

It belongs to the GatC family. Heterotrimer of A, B and C subunits.

It catalyses the reaction L-glutamyl-tRNA(Gln) + L-glutamine + ATP + H2O = L-glutaminyl-tRNA(Gln) + L-glutamate + ADP + phosphate + H(+). The enzyme catalyses L-aspartyl-tRNA(Asn) + L-glutamine + ATP + H2O = L-asparaginyl-tRNA(Asn) + L-glutamate + ADP + phosphate + 2 H(+). Functionally, allows the formation of correctly charged Asn-tRNA(Asn) or Gln-tRNA(Gln) through the transamidation of misacylated Asp-tRNA(Asn) or Glu-tRNA(Gln) in organisms which lack either or both of asparaginyl-tRNA or glutaminyl-tRNA synthetases. The reaction takes place in the presence of glutamine and ATP through an activated phospho-Asp-tRNA(Asn) or phospho-Glu-tRNA(Gln). The chain is Aspartyl/glutamyl-tRNA(Asn/Gln) amidotransferase subunit C from Caldicellulosiruptor saccharolyticus (strain ATCC 43494 / DSM 8903 / Tp8T 6331).